The chain runs to 276 residues: MVLASISEALISQGDGGERVAKRQRSAIVLLDLDILDCPICCEALTSPIFQCDNGHLACGSCCPKLSNKCPACTLPVGHSRSRAMESVLESILIPCPNVRFGCTKSFFYGKESAHEKECIFSQCSCPSSVCDYTGSYKDLYAHYKLTHSTNIFWNIKRFRCANFFTTSMLISDKILIKRVHEKKLLLAVQCFREPCGVYVTVSFIAPSAPEVGEFSYQLSYNVDGHTVTYESPEVKRVCKVSIETPQENFMLIPHSLLRGDLLEMQVFIIENVDQE.

The segment at 38-74 (CPICCEALTSPIFQCDNGHLACGSCCPKLSNKCPACT) adopts an RING-type zinc-finger fold. An SBD region spans residues 88-274 (VLESILIPCP…MQVFIIENVD (187 aa)). The SIAH-type zinc-finger motif lies at 91–149 (SILIPCPNVRFGCTKSFFYGKESAHEKECIFSQCSCPSSVCDYTGSYKDLYAHYKLTHS). Zn(2+)-binding residues include C96, C103, H115, C119, C126, C131, H143, and H148.

It belongs to the SINA (Seven in absentia) family.

The enzyme catalyses S-ubiquitinyl-[E2 ubiquitin-conjugating enzyme]-L-cysteine + [acceptor protein]-L-lysine = [E2 ubiquitin-conjugating enzyme]-L-cysteine + N(6)-ubiquitinyl-[acceptor protein]-L-lysine.. Its pathway is protein modification; protein ubiquitination. E3 ubiquitin-protein ligase that mediates ubiquitination and subsequent proteasomal degradation of target proteins. E3 ubiquitin ligases accept ubiquitin from an E2 ubiquitin-conjugating enzyme in the form of a thioester and then directly transfers the ubiquitin to targeted substrates. It probably triggers the ubiquitin-mediated degradation of different substrates. The sequence is that of Putative E3 ubiquitin-protein ligase SINA-like 9 from Arabidopsis thaliana (Mouse-ear cress).